A 96-amino-acid chain; its full sequence is Large ribosomal subunit protein bL28 (96 aa).

The protein belongs to the bacterial ribosomal protein bL28 family.

This Methylocella silvestris (strain DSM 15510 / CIP 108128 / LMG 27833 / NCIMB 13906 / BL2) protein is Large ribosomal subunit protein bL28.